Consider the following 528-residue polypeptide: ATP synthase F(1) complex catalytic subunit beta, mitochondrial (528 aa).

The transit peptide at 1-46 directs the protein to the mitochondrion; the sequence is MLGLVGRVVAASASGALRGLSPSAPLPQAQLLLRAAPAALQPARDY. O-linked (GlcNAc) serine glycosylation occurs at S106. K124 and K161 each carry N6-acetyllysine; alternate. N6-succinyllysine; alternate is present on residues K124 and K161. An N6-acetyllysine modification is found at K198. Positions 209, 210, 211, 212, 213, and 214 each coordinate ADP. G209 lines the ATP pocket. Phosphate-binding residues include G209, V210, G211, K212, and T213. ATP-binding residues include G211, K212, T213, and V214. T213 contacts Mg(2+). E238 lines the Mg(2+) pocket. Position 239 (R239) interacts with ATP. Residues K259 and K264 each carry the N6-acetyllysine; alternate modification. N6-succinyllysine; alternate is present on residues K259 and K264. Residue T312 is modified to Phosphothreonine. S415 is subject to Phosphoserine. K426 bears the N6-acetyllysine mark. S433 is modified (phosphoserine). 2 positions are modified to N6-acetyllysine: K480 and K485. The residue at position 522 (K522) is an N6-acetyllysine; alternate. K522 carries the N6-succinyllysine; alternate modification.

The protein belongs to the ATPase alpha/beta chains family. In terms of assembly, homotrimer. Component of the ATP synthase complex composed at least of ATP5F1A/subunit alpha, ATP5F1B/subunit beta, ATP5MC1/subunit c (homooctomer), MT-ATP6/subunit a, MT-ATP8/subunit 8, ATP5ME/subunit e, ATP5MF/subunit f, ATP5MG/subunit g, ATP5MK/subunit k, ATP5MJ/subunit j, ATP5F1C/subunit gamma, ATP5F1D/subunit delta, ATP5F1E/subunit epsilon, ATP5PF/subunit F6, ATP5PB/subunit b, ATP5PD/subunit d, ATP5PO/subunit OSCP. ATP synthase complex consists of a soluble F(1) head domain (subunits alpha(3) and beta(3)) - the catalytic core - and a membrane F(0) domain - the membrane proton channel (subunits c, a, 8, e, f, g, k and j). These two domains are linked by a central stalk (subunits gamma, delta, and epsilon) rotating inside the F1 region and a stationary peripheral stalk (subunits F6, b, d, and OSCP). Interacts with PPIF. Interacts with BCL2L1 isoform BCL-X(L); the interaction mediates the association of BCL2L1 isoform BCL-X(L) with the mitochondrial membrane F(1)F(0) ATP synthase and enhances neurons metabolic efficiency. Interacts with CLN5 and PPT1. Interacts with S100A1; this interaction increases F1-ATPase activity. Interacts with MTLN. Interacts with TTC5/STRAP; the interaction results in decreased mitochondrial ATP production.

The protein localises to the mitochondrion inner membrane. The catalysed reaction is ATP + H2O + 4 H(+)(in) = ADP + phosphate + 5 H(+)(out). Its function is as follows. Catalytic subunit beta, of the mitochondrial membrane ATP synthase complex (F(1)F(0) ATP synthase or Complex V) that produces ATP from ADP in the presence of a proton gradient across the membrane which is generated by electron transport complexes of the respiratory chain. ATP synthase complex consist of a soluble F(1) head domain - the catalytic core - and a membrane F(1) domain - the membrane proton channel. These two domains are linked by a central stalk rotating inside the F(1) region and a stationary peripheral stalk. During catalysis, ATP synthesis in the catalytic domain of F(1) is coupled via a rotary mechanism of the central stalk subunits to proton translocation. In vivo, can only synthesize ATP although its ATP hydrolase activity can be activated artificially in vitro. With the subunit alpha (ATP5F1A), forms the catalytic core in the F(1) domain. The sequence is that of ATP synthase F(1) complex catalytic subunit beta, mitochondrial from Bos taurus (Bovine).